Here is a 247-residue protein sequence, read N- to C-terminus: UDP-2,3-diacylglucosamine hydrolase (247 aa).

Mn(2+) is bound by residues Asp8, His10, Asp41, Asn79, and His115. 79-80 is a binding site for substrate; sequence NH. Residues Asp123, Lys165, Lys168, and His196 each coordinate substrate. Mn(2+) is bound by residues His196 and His198.

This sequence belongs to the LpxH family. Mn(2+) serves as cofactor.

It localises to the cell inner membrane. It catalyses the reaction UDP-2-N,3-O-bis[(3R)-3-hydroxytetradecanoyl]-alpha-D-glucosamine + H2O = 2-N,3-O-bis[(3R)-3-hydroxytetradecanoyl]-alpha-D-glucosaminyl 1-phosphate + UMP + 2 H(+). It functions in the pathway glycolipid biosynthesis; lipid IV(A) biosynthesis; lipid IV(A) from (3R)-3-hydroxytetradecanoyl-[acyl-carrier-protein] and UDP-N-acetyl-alpha-D-glucosamine: step 4/6. Its function is as follows. Hydrolyzes the pyrophosphate bond of UDP-2,3-diacylglucosamine to yield 2,3-diacylglucosamine 1-phosphate (lipid X) and UMP by catalyzing the attack of water at the alpha-P atom. Involved in the biosynthesis of lipid A, a phosphorylated glycolipid that anchors the lipopolysaccharide to the outer membrane of the cell. The protein is UDP-2,3-diacylglucosamine hydrolase of Blochmanniella floridana.